The primary structure comprises 317 residues: Transaldolase (317 aa).

The Schiff-base intermediate with substrate role is filled by Lys-126.

This sequence belongs to the transaldolase family. Type 1 subfamily. Homodimer.

It localises to the cytoplasm. The catalysed reaction is D-sedoheptulose 7-phosphate + D-glyceraldehyde 3-phosphate = D-erythrose 4-phosphate + beta-D-fructose 6-phosphate. It participates in carbohydrate degradation; pentose phosphate pathway; D-glyceraldehyde 3-phosphate and beta-D-fructose 6-phosphate from D-ribose 5-phosphate and D-xylulose 5-phosphate (non-oxidative stage): step 2/3. Its function is as follows. Transaldolase is important for the balance of metabolites in the pentose-phosphate pathway. In Burkholderia thailandensis (strain ATCC 700388 / DSM 13276 / CCUG 48851 / CIP 106301 / E264), this protein is Transaldolase.